We begin with the raw amino-acid sequence, 214 residues long: Cytolysin tenebrosin-B (214 aa).

Positions 1-19 are cleaved as a signal peptide; that stretch reads MNRLIIVFIVVTMICAATA. A propeptide spanning residues 20–35 is cleaved from the precursor; the sequence is LSTKRRINKEEKDEKR. A plays an important role in the hemolytic activity region spans residues 38 to 47; that stretch reads AVAGAVIEGA. The segment at 46–65 is N-terminal region; it reads GATLTFNVLQTVLKALGDIS. The phosphocholine site is built by Ser-89, Val-122, Ser-140, Pro-142, Tyr-168, Tyr-172, and Tyr-173. The interval 140-155 is trp-rich region, which is important for the binding to lipid membrane; it reads SIPFDYNLYSNWWNVK. Residues 179-181 carry the Cell attachment site, crucial for protein stability motif; the sequence is RGD.

It belongs to the actinoporin family. Sea anemone subfamily. In terms of assembly, octamer or nonamer in membranes. Monomer in the soluble state.

It is found in the secreted. Its subcellular location is the nematocyst. The protein resides in the target cell membrane. Its function is as follows. Pore-forming protein that forms cations-selective hydrophilic pores of around 1 nm and causes cardiac stimulation and cytolysis. Pore formation is a multi-step process that involves specific recognition of membrane sphingomyelin (but neither cholesterol nor phosphatidylcholine) using aromatic rich region and adjacent phosphocholine (POC) binding site, firm binding to the membrane (mainly driven by hydrophobic interactions) accompanied by the transfer of the N-terminal region to the lipid-water interface and finally pore formation after oligomerization of monomers. The polypeptide is Cytolysin tenebrosin-B (Actinia tenebrosa (Australian red waratah sea anemone)).